A 248-amino-acid chain; its full sequence is Proteasome subunit alpha type-1 (248 aa).

The protein belongs to the peptidase T1A family. As to quaternary structure, the 26S proteasome consists of a 20S proteasome core and two 19S regulatory subunits. The 20S proteasome core is composed of 28 subunits that are arranged in four stacked rings, resulting in a barrel-shaped structure. The two end rings are each formed by seven alpha subunits, and the two central rings are each formed by seven beta subunits. The catalytic chamber with the active sites is on the inside of the barrel.

It localises to the cytoplasm. Its subcellular location is the nucleus. Functionally, the proteasome is a multicatalytic proteinase complex which is characterized by its ability to cleave peptides with Arg, Phe, Tyr, Leu, and Glu adjacent to the leaving group at neutral or slightly basic pH. The proteasome has an ATP-dependent proteolytic activity. In Dictyostelium discoideum (Social amoeba), this protein is Proteasome subunit alpha type-1 (psmA1).